Reading from the N-terminus, the 210-residue chain is Ribosomal RNA large subunit methyltransferase E (210 aa).

Residues glycine 64, tryptophan 66, aspartate 84, asparagine 100, and aspartate 125 each coordinate S-adenosyl-L-methionine. The active-site Proton acceptor is lysine 165.

Belongs to the class I-like SAM-binding methyltransferase superfamily. RNA methyltransferase RlmE family.

The protein resides in the cytoplasm. It catalyses the reaction uridine(2552) in 23S rRNA + S-adenosyl-L-methionine = 2'-O-methyluridine(2552) in 23S rRNA + S-adenosyl-L-homocysteine + H(+). Its function is as follows. Specifically methylates the uridine in position 2552 of 23S rRNA at the 2'-O position of the ribose in the fully assembled 50S ribosomal subunit. The sequence is that of Ribosomal RNA large subunit methyltransferase E from Buchnera aphidicola subsp. Baizongia pistaciae (strain Bp).